Here is a 60-residue protein sequence, read N- to C-terminus: Large ribosomal subunit protein bL32 (60 aa).

This sequence belongs to the bacterial ribosomal protein bL32 family.

The chain is Large ribosomal subunit protein bL32 from Latilactobacillus sakei subsp. sakei (strain 23K) (Lactobacillus sakei subsp. sakei).